We begin with the raw amino-acid sequence, 498 residues long: NADH-quinone oxidoreductase subunit N (498 aa).

The next 14 helical transmembrane spans lie at 10–30, 44–64, 68–88, 109–129, 130–150, 164–184, 207–227, 239–259, 273–293, 301–321, 328–348, 377–397, 412–434, and 458–478; these read LMPLAPVMIVALTAVVVMLLI, VVGLNLAALYILLELFGGKFV, VMGMFMVDPFTMFYQFMILVA, ELYLLLLASVAGAMLMVASSH, YASFFISLELMSIPVYGLLAY, YLVLSATASAMLLMGMAYIYA, VLLGLALIIFAVAFKLSLAPF, PAPMATFLATAAKVATIGLFV, LVTVLTIIAVLSILVGNLLAV, ILGYSSIAHFGYLLIALISMT, VTVYVVTYVLTTIGAFGAVAL, ATLTVMMLSLAGIPLTAGFIG, FLAAMIIVGSGIGLYYYLRVMVV, and LMVLAAAALVIILGVYPDPMI.

Belongs to the complex I subunit 2 family. As to quaternary structure, NDH-1 is composed of 14 different subunits. Subunits NuoA, H, J, K, L, M, N constitute the membrane sector of the complex.

It is found in the cell inner membrane. The enzyme catalyses a quinone + NADH + 5 H(+)(in) = a quinol + NAD(+) + 4 H(+)(out). Functionally, NDH-1 shuttles electrons from NADH, via FMN and iron-sulfur (Fe-S) centers, to quinones in the respiratory chain. The immediate electron acceptor for the enzyme in this species is believed to be ubiquinone. Couples the redox reaction to proton translocation (for every two electrons transferred, four hydrogen ions are translocated across the cytoplasmic membrane), and thus conserves the redox energy in a proton gradient. In Acinetobacter baumannii (strain AB0057), this protein is NADH-quinone oxidoreductase subunit N.